Reading from the N-terminus, the 64-residue chain is MSKLKGPDGRIPDRLPDGRPAVAWERRWTEGTLPLWLVATAGGIAVIFVLGIFFYGSYQGVGAG.

A helical membrane pass occupies residues 35–55 (LWLVATAGGIAVIFVLGIFFY).

This sequence belongs to the PsbJ family. In terms of assembly, PSII is composed of 1 copy each of membrane proteins PsbA, PsbB, PsbC, PsbD, PsbE, PsbF, PsbH, PsbI, PsbJ, PsbK, PsbL, PsbM, PsbT, PsbX, PsbY, Psb30/Ycf12, peripheral proteins PsbO, CyanoQ (PsbQ), PsbU, PsbV and a large number of cofactors. It forms dimeric complexes.

Its subcellular location is the cellular thylakoid membrane. In terms of biological role, one of the components of the core complex of photosystem II (PSII). PSII is a light-driven water:plastoquinone oxidoreductase that uses light energy to abstract electrons from H(2)O, generating O(2) and a proton gradient subsequently used for ATP formation. It consists of a core antenna complex that captures photons, and an electron transfer chain that converts photonic excitation into a charge separation. This is Photosystem II reaction center protein J from Prochlorococcus marinus (strain MIT 9515).